Reading from the N-terminus, the 293-residue chain is Protease HtpX (293 aa).

2 helical membrane passes run 4–24 (IALFLLTNLAVMVVFGLVLSL) and 34–54 (GLMIMALLFGFGGSFVSLLMS). Residue H139 participates in Zn(2+) binding. The active site involves E140. Residue H143 participates in Zn(2+) binding. Helical transmembrane passes span 158 to 178 (VVNTFVIFISRILAQLAAGFM) and 193 to 213 (LIYFAVATVLELVFGILASII). A Zn(2+)-binding site is contributed by E222.

The protein belongs to the peptidase M48B family. Requires Zn(2+) as cofactor.

It localises to the cell inner membrane. This chain is Protease HtpX, found in Escherichia coli (strain ATCC 8739 / DSM 1576 / NBRC 3972 / NCIMB 8545 / WDCM 00012 / Crooks).